A 398-amino-acid chain; its full sequence is Phosphoglycerate kinase (398 aa).

Residues 23-25 (DFN), Arg38, 61-64 (HLGK), Arg122, and Arg155 each bind substrate. ATP contacts are provided by residues Lys206, Gly297, Glu328, and 354-357 (GGDS).

This sequence belongs to the phosphoglycerate kinase family. In terms of assembly, monomer.

The protein localises to the cytoplasm. The catalysed reaction is (2R)-3-phosphoglycerate + ATP = (2R)-3-phospho-glyceroyl phosphate + ADP. It participates in carbohydrate degradation; glycolysis; pyruvate from D-glyceraldehyde 3-phosphate: step 2/5. This is Phosphoglycerate kinase from Clostridium novyi (strain NT).